Reading from the N-terminus, the 218-residue chain is Lactosylceramide 4-alpha-galactosyltransferase (218 aa).

A DXD motif motif is present at residues 57-59 (DTD).

This sequence belongs to the glycosyltransferase 32 family.

Its subcellular location is the golgi apparatus membrane. It catalyses the reaction a beta-D-Gal-(1-&gt;4)-beta-D-Glc-(1&lt;-&gt;1)-Cer(d18:1(4E)) + UDP-alpha-D-galactose = a globoside Gb3Cer (d18:1(4E)) + UDP + H(+). The enzyme catalyses a beta-D-Gal-(1&lt;-&gt;1')-ceramide + UDP-alpha-D-galactose = alpha-D-Gal-(1-&gt;4)-beta-D-Gal-(1&lt;-&gt;1')-Cer + UDP + H(+). It participates in glycolipid biosynthesis. Catalyzes the transfer of galactose from UDP-alpha-D-galactose to lactosylceramide/beta-D-galactosyl-(1-&gt;4)-beta-D-glucosyl-(1&lt;-&gt;1)-ceramide(d18:1(4E)) to produce globotriaosylceramide/globoside Gb3Cer (d18:1(4E)). Also able to transfer galactose to galactosylceramide/beta-D-Gal-(1&lt;-&gt;1')-Cer. Globoside Gb3Cer is a glycosphingolipid of the globo serie, one of the major types of neutral root structures of glycosphingolipids, that constitute a significant portion of mammalian cell membranes. This Pongo pygmaeus (Bornean orangutan) protein is Lactosylceramide 4-alpha-galactosyltransferase (A4GALT).